The sequence spans 489 residues: Bypass of stop codon protein 5 (489 aa).

The segment at 1-42 (MQESKEPQNKFEGCQRISSSSSTLFGGTSFEEPRCGTSQGKE) is disordered. A compositionally biased stretch (low complexity) spans 18–30 (SSSSSTLFGGTSF). Phosphoserine is present on residues Ser111 and Ser350.

Belongs to the BUL1 family.

Appears to play a role in translation fidelity, and may act when translation is compromised. May be a component of the ubiquitination pathway. This is Bypass of stop codon protein 5 (BSC5) from Saccharomyces cerevisiae (strain ATCC 204508 / S288c) (Baker's yeast).